Reading from the N-terminus, the 435-residue chain is Dual specificity mitogen-activated protein kinase kinase jkk-1 (435 aa).

Over residues 35-49 the composition is skewed to basic and acidic residues; the sequence is RDRRSTSVDQKHKEC. The disordered stretch occupies residues 35–90; that stretch reads RDRRSTSVDQKHKECSSTSSSPQHQRPNNIGYLTSPMERKFTPLSMKPSPSRRDTE. Over residues 50–66 the composition is skewed to polar residues; that stretch reads SSTSSSPQHQRPNNIGY. Positions 122 to 385 constitute a Protein kinase domain; it reads IHIISLLGSG…YRQLMKHDFY (264 aa). ATP is bound by residues 128–136 and K149; that span reads LGSGSCGVV. The active-site Proton acceptor is D246.

Belongs to the protein kinase superfamily. STE Ser/Thr protein kinase family. MAP kinase kinase subfamily. Interacts with unc-16. Mg(2+) serves as cofactor. As to expression, expressed in most neurons, including nerve ring, head ganglions, dorsal and ventral nerve cords and tail ganglions.

It localises to the cytoplasm. The protein localises to the perikaryon. The protein resides in the cell projection. It is found in the axon. It carries out the reaction L-seryl-[protein] + ATP = O-phospho-L-seryl-[protein] + ADP + H(+). It catalyses the reaction L-threonyl-[protein] + ATP = O-phospho-L-threonyl-[protein] + ADP + H(+). The enzyme catalyses L-tyrosyl-[protein] + ATP = O-phospho-L-tyrosyl-[protein] + ADP + H(+). Its function is as follows. Dual specificity protein kinase which acts as an essential component of the JNK signal transduction pathway. May phosphorylate jnk-1. Plays a role in coordinating locomotion via D-type GABAergic motoneurons and in regulating synaptic vesicle transport downstream of adapter protein unc-16 and probably by activating jnk-1. Positively regulates lifespan. Upon environmental stress such as heat stress regulates daf-16 nuclear translocation probably by activating jnk-1. Regulates germline cell apoptosis in response to heavy metals such as Cu(2+) and to arsenite. In Caenorhabditis elegans, this protein is Dual specificity mitogen-activated protein kinase kinase jkk-1.